The sequence spans 334 residues: Protein SCO1 homolog 1, mitochondrial (334 aa).

A mitochondrion-targeting transit peptide spans 1 to 13 (MASALCRTASRLR). The disordered stretch occupies residues 74-120 (SASDTTSKHDSGKPETKSSEKNEKSGGSESSDGGSDHKNERASGKDV). Basic and acidic residues-rich tracts occupy residues 79 to 99 (TSKH…EKSG) and 107 to 120 (GSDH…GKDV). Residues 125–144 (VSWMSFFLLFATGAGLVYYY) form a helical membrane-spanning segment. One can recognise a Thioredoxin domain in the interval 166–331 (PSAGKAAIGG…TDGVVKEIRQ (166 aa)). Cu cation is bound by residues Cys-206, Cys-210, and His-295.

The protein belongs to the SCO1/2 family. In terms of tissue distribution, expressed in the whole plant with highest expression in imbibed seeds, embryos, endosperm, and root tips.

Its subcellular location is the mitochondrion inner membrane. Functionally, thought to play a role in cellular copper homeostasis, mitochondrial redox signaling or insertion of copper into the active site of COX. Plays an essential role in embryo development. The chain is Protein SCO1 homolog 1, mitochondrial (HCC1) from Arabidopsis thaliana (Mouse-ear cress).